A 104-amino-acid polypeptide reads, in one-letter code: NADH-quinone oxidoreductase subunit K (104 aa).

A run of 3 helical transmembrane segments spans residues 4–24 (VPAS…LFGA), 31–51 (VIVL…LVAF), and 67–87 (LFTM…LIAL).

Belongs to the complex I subunit 4L family. As to quaternary structure, NDH-1 is composed of 14 different subunits. Subunits NuoA, H, J, K, L, M, N constitute the membrane sector of the complex.

The protein localises to the cell membrane. It carries out the reaction a quinone + NADH + 5 H(+)(in) = a quinol + NAD(+) + 4 H(+)(out). In terms of biological role, NDH-1 shuttles electrons from NADH, via FMN and iron-sulfur (Fe-S) centers, to quinones in the respiratory chain. The immediate electron acceptor for the enzyme in this species is believed to be a menaquinone. Couples the redox reaction to proton translocation (for every two electrons transferred, four hydrogen ions are translocated across the cytoplasmic membrane), and thus conserves the redox energy in a proton gradient. The sequence is that of NADH-quinone oxidoreductase subunit K from Bacillus cereus (strain Q1).